Reading from the N-terminus, the 500-residue chain is Glycerol kinase (500 aa).

Thr-13 provides a ligand contact to ADP. The ATP site is built by Thr-13, Thr-14, and Ser-15. Sn-glycerol 3-phosphate is bound at residue Thr-13. Arg-17 lines the ADP pocket. Arg-83, Glu-84, and Tyr-135 together coordinate sn-glycerol 3-phosphate. Residues Arg-83, Glu-84, and Tyr-135 each contribute to the glycerol site. His-231 is modified (phosphohistidine; by HPr). Asp-245 is a binding site for sn-glycerol 3-phosphate. 2 residues coordinate glycerol: Asp-245 and Gln-246. Thr-267 and Gly-310 together coordinate ADP. ATP is bound by residues Thr-267, Gly-310, Gln-314, and Gly-411. Gly-411 and Asn-415 together coordinate ADP.

It belongs to the FGGY kinase family. Homotetramer and homodimer (in equilibrium). The phosphoenolpyruvate-dependent sugar phosphotransferase system (PTS), including enzyme I, and histidine-containing protein (HPr) are required for the phosphorylation, which leads to the activation of the enzyme.

The catalysed reaction is glycerol + ATP = sn-glycerol 3-phosphate + ADP + H(+). The protein operates within polyol metabolism; glycerol degradation via glycerol kinase pathway; sn-glycerol 3-phosphate from glycerol: step 1/1. With respect to regulation, activated by phosphorylation and inhibited by fructose 1,6-bisphosphate (FBP). Key enzyme in the regulation of glycerol uptake and metabolism. Catalyzes the phosphorylation of glycerol to yield sn-glycerol 3-phosphate. This chain is Glycerol kinase, found in Oceanobacillus iheyensis (strain DSM 14371 / CIP 107618 / JCM 11309 / KCTC 3954 / HTE831).